The chain runs to 455 residues: GTPase Der (455 aa).

2 consecutive EngA-type G domains span residues 4 to 169 and 178 to 353; these read PVVA…PPKD and IQMA…EQHR. GTP is bound by residues 10 to 17, 57 to 61, 120 to 123, 184 to 191, 231 to 235, and 296 to 299; these read GRPNVGKS, DTGGL, NKCE, DTAGI, and NKWD. The 86-residue stretch at 354–439 folds into the KH-like domain; sequence RRVSTSVVNE…PVKLYWRGKQ (86 aa).

This sequence belongs to the TRAFAC class TrmE-Era-EngA-EngB-Septin-like GTPase superfamily. EngA (Der) GTPase family. As to quaternary structure, associates with the 50S ribosomal subunit.

In terms of biological role, GTPase that plays an essential role in the late steps of ribosome biogenesis. This Parasynechococcus marenigrum (strain WH8102) protein is GTPase Der.